Here is a 293-residue protein sequence, read N- to C-terminus: Elongation factor Ts (293 aa).

Positions 80 to 83 are involved in Mg(2+) ion dislocation from EF-Tu; it reads TDFV.

It belongs to the EF-Ts family.

The protein localises to the cytoplasm. Functionally, associates with the EF-Tu.GDP complex and induces the exchange of GDP to GTP. It remains bound to the aminoacyl-tRNA.EF-Tu.GTP complex up to the GTP hydrolysis stage on the ribosome. The chain is Elongation factor Ts from Burkholderia thailandensis (strain ATCC 700388 / DSM 13276 / CCUG 48851 / CIP 106301 / E264).